Reading from the N-terminus, the 798-residue chain is ABC transporter G family member 4 (798 aa).

Residues 1 to 51 form a disordered region; that stretch reads MEDIGNNNFEIIDDKSDEKNDENFEDKNSRNNINEEQILSNQQQQQQQQQQ. The span at 12 to 29 shows a compositional bias: basic and acidic residues; that stretch reads IDDKSDEKNDENFEDKNS. Over residues 30 to 41 the composition is skewed to polar residues; that stretch reads RNNINEEQILSN. A coiled-coil region spans residues 34–83; that stretch reads NEEQILSNQQQQQQQQQQQQQQQQQQQQQQQQQQQQQQEQQQFKNEVINT. The span at 42–51 shows a compositional bias: low complexity; the sequence is QQQQQQQQQQ. The region spanning 211–464 is the ABC transporter domain; that stretch reads IDIEDIESQV…SIDSNYKCPP (254 aa). 253–260 serves as a coordination point for ATP; it reads GPSGSGKS. Helical transmembrane passes span 540 to 560, 579 to 599, 628 to 648, 656 to 676, 687 to 707, 713 to 733, and 771 to 791; these read VVFF…SACF, LFFF…STFV, IVSS…IVHL, ILSL…VIAM, FSYC…LVPI, SFGW…IVII, and SIGI…IGLY. One can recognise an ABC transmembrane type-2 domain in the interval 540 to 793; the sequence is VVFFSKIVIA…ILAYIGLYKF (254 aa).

This sequence belongs to the ABC transporter superfamily. ABCG family. Eye pigment precursor importer (TC 3.A.1.204) subfamily.

It is found in the membrane. The chain is ABC transporter G family member 4 (abcG4) from Dictyostelium discoideum (Social amoeba).